Consider the following 189-residue polypeptide: GTPase HRas (189 aa).

10–17 contacts GTP; it reads GAKGVGKS. The short motif at 32-40 is the Effector region element; the sequence is YDPTIEDSY. Residues 57–61 and 116–119 contribute to the GTP site; these read DTAGQ and NKCD. 2 S-palmitoyl cysteine; by host lipidation sites follow: C181 and C184. Residue C186 is modified to Cysteine methyl ester; by host. C186 carries the S-farnesyl cysteine; by host lipid modification. Positions 187-189 are cleaved as a propeptide — removed in mature form; sequence VLS.

Belongs to the small GTPase superfamily. Ras family.

The protein resides in the host cell membrane. The catalysed reaction is GTP + H2O = GDP + phosphate + H(+). With respect to regulation, alternates between an inactive form bound to GDP and an active form bound to GTP. Activated by a guanine nucleotide-exchange factor (GEF) and inactivated by a GTPase-activating protein (GAP). The polypeptide is GTPase HRas (H-RAS) (Moloney murine sarcoma virus (MoMSV)).